The following is a 161-amino-acid chain: Large ribosomal subunit protein bL9 (161 aa).

The protein belongs to the bacterial ribosomal protein bL9 family.

Binds to the 23S rRNA. The protein is Large ribosomal subunit protein bL9 of Protochlamydia amoebophila (strain UWE25).